The following is a 938-amino-acid chain: ATP-dependent 6-phosphofructokinase subunit beta (938 aa).

The segment at 1–552 is N-terminal catalytic PFK domain 1; that stretch reads MTQSLPLLNG…HLDNFMAINS (552 aa). ATP contacts are provided by residues glycine 185, 249–250, and 279–282; these read RC and GDGS. Aspartate 280 provides a ligand contact to Mg(2+). Beta-D-fructose 6-phosphate is bound by residues 325–327, arginine 362, 369–371, glutamate 426, arginine 454, and 460–463; these read SID, MGR, and HVQR. Residue aspartate 327 is the Proton acceptor of the active site. Positions 553–566 are interdomain linker; the sequence is ADHIEPKLPEHTHM. The tract at residues 567–938 is C-terminal regulatory PFK domain 2; it reads KIAIVNVGAP…ADHLVGRKKL (372 aa). Residues arginine 637, 695-699, arginine 733, 740-742, lysine 826, 832-835, and arginine 915 contribute to the beta-D-fructose 2,6-bisphosphate site; these read TLSNN, QGG, and HVQQ.

This sequence belongs to the phosphofructokinase type A (PFKA) family. ATP-dependent PFK group I subfamily. Eukaryotic two domain clade 'E' sub-subfamily. In terms of assembly, heterooctamer of 4 alpha and 4 beta chains. Requires Mg(2+) as cofactor.

The protein resides in the cytoplasm. It catalyses the reaction beta-D-fructose 6-phosphate + ATP = beta-D-fructose 1,6-bisphosphate + ADP + H(+). It participates in carbohydrate degradation; glycolysis; D-glyceraldehyde 3-phosphate and glycerone phosphate from D-glucose: step 3/4. With respect to regulation, allosterically activated by ADP, AMP, or fructose 2,6-bisphosphate, and allosterically inhibited by ATP or citrate. In terms of biological role, catalyzes the phosphorylation of D-fructose 6-phosphate to fructose 1,6-bisphosphate by ATP, the first committing step of glycolysis. This chain is ATP-dependent 6-phosphofructokinase subunit beta (PFK2), found in Kluyveromyces lactis (strain ATCC 8585 / CBS 2359 / DSM 70799 / NBRC 1267 / NRRL Y-1140 / WM37) (Yeast).